The chain runs to 820 residues: Cell division control protein 48 homolog C (820 aa).

Disordered regions lie at residues 72-157 (RVKD…RFDL) and 169-188 (LNSS…VEVE). Positions 76–87 (EDEDDNIGDEEG) are enriched in acidic residues. Residues 85–122 (EEGSASQRKKQRRVDEKEEKLQRAEQSHLRKRNMERSV) adopt a coiled-coil conformation. A compositionally biased stretch (basic and acidic residues) spans 97-119 (RVDEKEEKLQRAEQSHLRKRNME). The segment covering 121–142 (SVSSSPSSSSSSEDSGDVSTSE) has biased composition (low complexity). Residues 274-281 (GPPGCGKT) and 569-576 (GPPGCGKT) contribute to the ATP site.

Belongs to the AAA ATPase family.

It localises to the nucleus. The protein resides in the cytoplasm. It is found in the cytoskeleton. The protein localises to the phragmoplast. In terms of biological role, probably functions in cell division and growth processes. Interacts with certain SNAREs as part of specialized membrane fusion events where vesicles from the same organelle fuse (homotypic fusion). In Arabidopsis thaliana (Mouse-ear cress), this protein is Cell division control protein 48 homolog C (CDC48C).